Consider the following 476-residue polypeptide: Probable coniferyl aldehyde dehydrogenase (476 aa).

Active-site residues include glutamate 225 and cysteine 259.

Belongs to the aldehyde dehydrogenase family. As to quaternary structure, homodimer.

It carries out the reaction (E)-coniferaldehyde + NADP(+) + H2O = (E)-ferulate + NADPH + 2 H(+). It catalyses the reaction (E)-coniferaldehyde + NAD(+) + H2O = (E)-ferulate + NADH + 2 H(+). In Pseudomonas aeruginosa (strain ATCC 15692 / DSM 22644 / CIP 104116 / JCM 14847 / LMG 12228 / 1C / PRS 101 / PAO1), this protein is Probable coniferyl aldehyde dehydrogenase (calB).